A 394-amino-acid chain; its full sequence is Keratin, type I cuticular Ha4 (394 aa).

The segment at M1–E56 is head. Residues E56–L367 enclose the IF rod domain. The tract at residues K57 to R91 is coil 1A. A linker 1 region spans residues S92 to S102. The interval Y103–S203 is coil 1B. Residues Q204–V219 form a linker 12 region. Residues D220 to E363 are coil 2. A tail region spans residues D364–N394.

This sequence belongs to the intermediate filament family. In terms of tissue distribution, expressed in the hair follicles.

The polypeptide is Keratin, type I cuticular Ha4 (KRT34) (Homo sapiens (Human)).